We begin with the raw amino-acid sequence, 229 residues long: MSRAGNGGRQRIKTAKGRSASSIKWIQRQLNDPYVRKAQAEGYRSRAAYKLIELDERFHFLRGAKRVIDLGIAPGGWTQVVRRVCPQAAIVGIDLLPTDPIDGAIILQMDFMSDEAPAQLAEALGGPADIVLSDMAANTVGHQQTDHLRTMALVEAGCLFASEVLRPGGTYVAKVLAGGADHGLVAELKRLFTTVKHAKPPASRKDSSEWYVIAQGFKGRPEAAGADGE.

The interval 1 to 20 (MSRAGNGGRQRIKTAKGRSA) is disordered. Residues glycine 75, tryptophan 77, aspartate 94, aspartate 110, and aspartate 134 each coordinate S-adenosyl-L-methionine. The active-site Proton acceptor is lysine 174.

It belongs to the class I-like SAM-binding methyltransferase superfamily. RNA methyltransferase RlmE family.

The protein resides in the cytoplasm. The catalysed reaction is uridine(2552) in 23S rRNA + S-adenosyl-L-methionine = 2'-O-methyluridine(2552) in 23S rRNA + S-adenosyl-L-homocysteine + H(+). Specifically methylates the uridine in position 2552 of 23S rRNA at the 2'-O position of the ribose in the fully assembled 50S ribosomal subunit. This is Ribosomal RNA large subunit methyltransferase E from Rhizorhabdus wittichii (strain DSM 6014 / CCUG 31198 / JCM 15750 / NBRC 105917 / EY 4224 / RW1) (Sphingomonas wittichii).